Consider the following 210-residue polypeptide: Mitochondrial import receptor subunit TOM20-2 (210 aa).

Position 1 is an N-acetylmethionine (Met1). Over 1–178 (MEFSTADFER…SSKKKKRNTE (178 aa)) the chain is Cytoplasmic. TPR repeat units lie at residues 42–75 (LLELSQFQPIPEAKLMLNDAISKLEEALTINPGK) and 83–120 (ANAYTAHAFYVHDPEEAKEHFDKATEYFQRAENEDPGN). Over residues 151-161 (GGGGGGGGGGM) the composition is skewed to gly residues. Residues 151–172 (GGGGGGGGGGMASSNVSQSSKK) are disordered. The helical transmembrane segment at 179–199 (FTYDVCGWIILACGIVAWVGM) threads the bilayer. The Mitochondrial intermembrane segment spans residues 200–210 (AKSLGPPPPAR).

It belongs to the Tom20 family. In terms of assembly, forms part of the preprotein translocase complex of the outer mitochondrial membrane (TOM complex) which consists of at least 6 different proteins (TOM5, TOM6, TOM7, TOM20, TOM22/TOM9 and TOM40). Component of a mitochondrial large protein complex that contains, at least, MIC60, DGS1, TOM40, TOM20 proteins, and petC/RISP. Post-translationally, the N-terminus is blocked. In terms of tissue distribution, expressed in roots, flowers, young cotyledons and leaves.

It is found in the mitochondrion outer membrane. Its function is as follows. Central component of the receptor complex responsible for the recognition and translocation of cytosolically synthesized mitochondrial preproteins. Together with TOM22 functions as the transit peptide receptor at the surface of the mitochondrion outer membrane and facilitates the movement of preproteins into the translocation pore. This Arabidopsis thaliana (Mouse-ear cress) protein is Mitochondrial import receptor subunit TOM20-2.